We begin with the raw amino-acid sequence, 339 residues long: Glycerol-3-phosphate dehydrogenase [NAD(P)+] (339 aa).

Residues Ser13, Trp14, and Lys108 each contribute to the NADPH site. Lys108, Gly139, and Ser141 together coordinate sn-glycerol 3-phosphate. Ala143 contributes to the NADPH binding site. 5 residues coordinate sn-glycerol 3-phosphate: Lys194, Asp247, Ser257, Arg258, and Asn259. Lys194 serves as the catalytic Proton acceptor. Arg258 is a binding site for NADPH. NADPH is bound by residues Val282 and Glu284.

It belongs to the NAD-dependent glycerol-3-phosphate dehydrogenase family.

It localises to the cytoplasm. The enzyme catalyses sn-glycerol 3-phosphate + NAD(+) = dihydroxyacetone phosphate + NADH + H(+). It carries out the reaction sn-glycerol 3-phosphate + NADP(+) = dihydroxyacetone phosphate + NADPH + H(+). The protein operates within membrane lipid metabolism; glycerophospholipid metabolism. Its function is as follows. Catalyzes the reduction of the glycolytic intermediate dihydroxyacetone phosphate (DHAP) to sn-glycerol 3-phosphate (G3P), the key precursor for phospholipid synthesis. This is Glycerol-3-phosphate dehydrogenase [NAD(P)+] from Streptococcus equi subsp. zooepidemicus (strain H70).